Here is a 337-residue protein sequence, read N- to C-terminus: Dolichyl-phosphate beta-glucosyltransferase ALG5C (337 aa).

At 1–6 (MNDLPP) the chain is on the lumenal side. A helical transmembrane segment spans residues 7-27 (IANLISNILFVLLIITFLYAL). Over 28-337 (CSRFVSDKTL…ADTPISDFEV (310 aa)) the chain is Cytoplasmic.

It belongs to the glycosyltransferase 2 family.

Its subcellular location is the endoplasmic reticulum membrane. It carries out the reaction a di-trans,poly-cis-dolichyl phosphate + UDP-alpha-D-glucose = a di-trans,poly-cis-dolichyl beta-D-glucosyl phosphate + UDP. The protein operates within protein modification; protein glycosylation. Dolichyl-phosphate beta-glucosyltransferase involved in the glycosylation of glycoproteins through the synthesis of dolichyl beta-D-glucosyl phosphate which serves as a sugar donor for transfer of three glucose residues to the Man-9-GlcNAc-2-PP-dolichol precursor to N-glycans. This Trichomonas vaginalis (strain ATCC PRA-98 / G3) protein is Dolichyl-phosphate beta-glucosyltransferase ALG5C.